We begin with the raw amino-acid sequence, 313 residues long: Potassium channel subfamily K member 6 (313 aa).

At 1-4 (MRRG) the chain is on the cytoplasmic side. A helical membrane pass occupies residues 5–25 (ALLASALAAYAGYLALGALLV). Asn-79 and Asn-85 each carry an N-linked (GlcNAc...) asparagine glycan. Positions 90 to 115 (AWDFASALFFASTLVTTVGYGYTTPL) form an intramembrane region, pore-forming. Thr-106, Val-107, Gly-108, and Tyr-109 together coordinate K(+). The interval 106-111 (TVGYGY) is selectivity filter 1. Residues 121 to 141 (AFSIVFALLGVPITMLLLTAS) traverse the membrane as a helical segment. Over 142–172 (AQRLSLLLTHAPLSWLSLHWGWPPQRAARWH) the chain is Cytoplasmic. Residues 173–193 (LVALLMVIVAIFFLVPAAVFA) form a helical membrane-spanning segment. The pore-forming intramembrane region spans 199 to 223 (WSFLDAFYFCFISLSTIGLGDYVPG). Thr-214, Ile-215, and Gly-216 together coordinate K(+). The interval 214–219 (TIGLGD) is selectivity filter 2. Residues 236–256 (VLVTAYLFLGLVAMVLVLQTF) traverse the membrane as a helical segment. Topologically, residues 257 to 313 (RRVSDLHGLTELILLPDPDPASLSQDEDDQVAVLDARTDLHQHLSAASHADYASIPR) are cytoplasmic. 2 short sequence motifs (lysosomal targeting signal) span residues 282 to 290 (DEDDQVAVL) and 308 to 312 (YASIP).

The protein belongs to the two pore domain potassium channel (TC 1.A.1.8) family. In terms of assembly, homodimer; disulfide-linked. In terms of processing, N-glycosylation is necessary for targeting to lysosomes.

The protein localises to the late endosome membrane. Its subcellular location is the lysosome membrane. The enzyme catalyses K(+)(in) = K(+)(out). In terms of biological role, k(+) channel that conducts outward rectifying currents at the membranes of the endolysosomal system. Active in lysosomes where it regulates lysosome numbers and size. In macrophages, enables K(+) efflux coupled to ATP-induced NLRP3 inflammasome activation upon bacterial infection. Cooperates with ATP-gated P2RX7 to activate NLRP3 inflammasome, with P2RX7 conducting Ca(2+) and Na(+) influx that sets the membrane potential for K(+) efflux. The chain is Potassium channel subfamily K member 6 from Mus musculus (Mouse).